Consider the following 564-residue polypeptide: MASTSTTIRSHSSSRRGFSANSARLPGVSRSGFSSVSVSRSRGSGGLGGACGGAGFGSRSLYGLGGSKRISIGGGSCAISGGYGSRAGGSYGFGGAGSGFGFGGGAGIGFGLGGGAGLAGGFGGPGFPVCPPGGIQEVTVNQSLLTPLNLQIDPTIQRVRAEEREQIKTLNNKFASFIDKVRFLEQQNKVLETKWTLLQEQGTKTVRQNLEPLFEQYINNLRRQLDSIVGERGRLDSELRGMQDLVEDFKNKYEDEINKRTAAENEFVTLKKDVDAAYMNKVELQAKADTLTDEINFLRALYDAELSQMQTHISDTSVVLSMDNNRNLDLDSIIAEVKAQYEEIAQRSRAEAESWYQTKYEELQVTAGRHGDDLRNTKQEIAEINRMIQRLRSEIDHVKKQCANLQAAIADAEQRGEMALKDAKNKLEGLEDALQKAKQDLARLLKEYQELMNVKLALDVEIATYRKLLEGEECRLNGEGVGQVNISVVQSTVSSGYGGASGVGSGLGLGGGSSYSYGSGLGVGGGFSSSSGRAIGGGLSSVGGGSSTIKYTTTSSSSRKSYKH.

Over residues Met1 to His11 the composition is skewed to low complexity. The tract at residues Met1–Ala23 is disordered. Ala2 carries the N-acetylalanine modification. The head stretch occupies residues Ala2–Glu162. The segment at Glu163–Leu198 is coil 1A. The region spanning Glu163–Leu476 is the IF rod domain. The tract at residues Gln199 to Tyr217 is linker 1. The coil 1B stretch occupies residues Ile218–Met309. Residues Gln310–Ile333 form a linker 12 region. A coil 2 region spans residues Ile334 to Glu472. Residues Glu473 to His564 are tail.

Belongs to the intermediate filament family. In terms of assembly, heterodimer of a type I and a type II keratin. KRT6 isomers associate with KRT16 and/or KRT17. Interacts with TCHP. In terms of tissue distribution, expressed in the corneal epithelium (at protein level).

Functionally, epidermis-specific type I keratin involved in wound healing. Involved in the activation of follicular keratinocytes after wounding, while it does not play a major role in keratinocyte proliferation or migration. Participates in the regulation of epithelial migration by inhibiting the activity of SRC during wound repair. In Homo sapiens (Human), this protein is Keratin, type II cytoskeletal 6A (KRT6A).